A 56-amino-acid chain; its full sequence is Small ribosomal subunit protein bS21 (56 aa).

The protein belongs to the bacterial ribosomal protein bS21 family.

The chain is Small ribosomal subunit protein bS21 from Synechococcus sp. (strain WH7803).